The following is a 269-amino-acid chain: Autophagy-related protein 5 (269 aa).

A Glycyl lysine isopeptide (Lys-Gly) (interchain with G-Cter in ATG12) cross-link involves residue Lys-102.

This sequence belongs to the ATG5 family. As to quaternary structure, conjugated with ATG12. The ATG5-ATG12 conjugate forms a complex with several units of ATG16. The ATG12-ATG5 conjugate also associates with ATG3. Conjugated to ATG12; which is essential for autophagy. Conjugation with ATG12 involves ATG7 as an E1-like activating enzyme and ATG10 as an E2-like conjugating enzyme.

The protein resides in the preautophagosomal structure membrane. In terms of biological role, involved in cytoplasm to vacuole transport (Cvt) and autophagic vesicle formation. Autophagy is essential for maintenance of amino acid levels and protein synthesis under nitrogen starvation. Required for selective autophagic degradation of the nucleus (nucleophagy). Also required for mitophagy, which eliminates defective or superfluous mitochondria in order to fulfill cellular energy requirements and prevent excess ROS production. Conjugation with ATG12, through a ubiquitin-like conjugating system involving ATG7 as an E1-like activating enzyme and ATG10 as an E2-like conjugating enzyme, is essential for its function. The ATG12-ATG5 conjugate acts as an E3-like enzyme which is required for lipidation of ATG8 and ATG8 association to the vesicle membranes. ATG12-ATG5 rearranges the ATG3 catalytic center and enhances its E2 activity. Required for proper vegetative growth, asexual/sexual reproduction, but, unlike several plant and animal pathogenic fungi, where ATG5 is required for infection, in B.bassiana it is dispensable for pathogenesis. The protein is Autophagy-related protein 5 of Beauveria bassiana (strain ARSEF 2860) (White muscardine disease fungus).